A 138-amino-acid chain; its full sequence is MRTLWIVAVLLLGVEGSLVQFEMLIMKVAKRSGLFSYSAYGCYCGWGGHGRPQDATDHCCFVHDCCYGKVTDCNPKTASYTYSEENGEIVCGGDDPCKKQVCECDRVAAICFRDNIPTYDNKYWRFPPENCQEEPEPC.

Residues 1 to 16 (MRTLWIVAVLLLGVEG) form the signal peptide. 7 cysteine pairs are disulfide-bonded: C42–C131, C44–C60, C59–C111, C65–C138, C66–C104, C73–C97, and C91–C102. Positions 43, 45, and 47 each coordinate Ca(2+). H63 is an active-site residue. A Ca(2+)-binding site is contributed by D64. D105 is an active-site residue.

Belongs to the phospholipase A2 family. Group II subfamily. D49 sub-subfamily. In terms of assembly, homodimer. The cofactor is Ca(2+). In terms of tissue distribution, expressed by the venom gland.

It localises to the secreted. It catalyses the reaction a 1,2-diacyl-sn-glycero-3-phosphocholine + H2O = a 1-acyl-sn-glycero-3-phosphocholine + a fatty acid + H(+). In terms of biological role, snake venom phospholipase A2 (PLA2) that shows very low inhibition of ADP-induced platelet aggregation in platelet-rich plasma of human, rabbit and guinea pig. Shows edema-inducing activity and myotoxicity. PLA2 catalyzes the calcium-dependent hydrolysis of the 2-acyl groups in 3-sn-phosphoglycerides. The polypeptide is Acidic phospholipase A2 CoaPLA2 (Crotalus lutosus abyssus (Grand Canyon rattlesnake)).